A 194-amino-acid polypeptide reads, in one-letter code: Heme transporter hrg-1 (194 aa).

4 consecutive transmembrane segments (helical) span residues 45–65, 71–91, 113–133, and 143–163; these read QIWIAWLGVSAGVMAGTVFAI, IAVTMCFISSGFATLVLHLHL, GATVSFLSFIAMVFCLVVAGI, and LMGANLWIAAVWFFMTSKWSA. Positions 182–183 match the Di-leucine motif motif; the sequence is LL.

This sequence belongs to the HRG family. Specifically expressed in the intestinal cells in larvae and adults.

Its subcellular location is the endosome membrane. It localises to the lysosome membrane. Functionally, heme transporter that regulates intracellular heme availability through the endosomal or lysosomal compartment. In Caenorhabditis elegans, this protein is Heme transporter hrg-1 (hrg-1).